The primary structure comprises 491 residues: UDP-N-acetylmuramate--L-alanine ligase (491 aa).

Residue 126-132 (GTHGKTT) coordinates ATP.

This sequence belongs to the MurCDEF family.

It is found in the cytoplasm. The catalysed reaction is UDP-N-acetyl-alpha-D-muramate + L-alanine + ATP = UDP-N-acetyl-alpha-D-muramoyl-L-alanine + ADP + phosphate + H(+). The protein operates within cell wall biogenesis; peptidoglycan biosynthesis. Cell wall formation. The chain is UDP-N-acetylmuramate--L-alanine ligase from Escherichia coli (strain SMS-3-5 / SECEC).